A 263-amino-acid polypeptide reads, in one-letter code: Acyl-[acyl-carrier-protein]--UDP-N-acetylglucosamine O-acyltransferase (263 aa).

This sequence belongs to the transferase hexapeptide repeat family. LpxA subfamily. As to quaternary structure, homotrimer.

It localises to the cytoplasm. The enzyme catalyses a (3R)-hydroxyacyl-[ACP] + UDP-N-acetyl-alpha-D-glucosamine = a UDP-3-O-[(3R)-3-hydroxyacyl]-N-acetyl-alpha-D-glucosamine + holo-[ACP]. The protein operates within glycolipid biosynthesis; lipid IV(A) biosynthesis; lipid IV(A) from (3R)-3-hydroxytetradecanoyl-[acyl-carrier-protein] and UDP-N-acetyl-alpha-D-glucosamine: step 1/6. Functionally, involved in the biosynthesis of lipid A, a phosphorylated glycolipid that anchors the lipopolysaccharide to the outer membrane of the cell. The protein is Acyl-[acyl-carrier-protein]--UDP-N-acetylglucosamine O-acyltransferase of Stenotrophomonas maltophilia (strain K279a).